A 218-amino-acid polypeptide reads, in one-letter code: Oocyte-specific homeobox protein 7 (218 aa).

Positions 40 to 72 (SPLVTPGSTMQSSLSVPERNLLQQESEGPSRQS) are enriched in polar residues. Residues 40–77 (SPLVTPGSTMQSSLSVPERNLLQQESEGPSRQSGCMPL) form a disordered region. Positions 94–153 (FRKERIVYSKEQQRLLQKHFDECQYPKEKKIVELAVLIGVTKMEIKKWFKNNRAKYRQMN) form a DNA-binding region, homeobox.

Belongs to the paired homeobox family. Obox subfamily. As to expression, specifically expressed in oocytes and early embryos.

It localises to the nucleus. Its function is as follows. Transcription factor required for zygotic genome activation (ZGA), a critical event in early embryonic development during which the developmental control passes from maternally provided mRNAs to the expression of the zygotic genome after fertilization. Together with other Obox family members, required in early two-cell stage embryos to kick-start the major ZGA wave by facilitating RNA Polymerase II 'pre-configuration', during which RNA Polymerase II relocates from the initial one-cell stage binding targets to ZGA gene promoters and distal enhancers. Mechanistically, promotes recruitment of RNA Polymerase II from (CG-rich) non-ZGA genes to (CG-poor) ZGA genes at the two-cell stage. Binds to regulatory DNA sequences containing a 5'-ACNCCTTTAATCCCAG-3' sequence motif. Most maternal and zygotic Obox family proteins can compensate for one another. The sequence is that of Oocyte-specific homeobox protein 7 from Mus musculus (Mouse).